The sequence spans 1162 residues: DNA-directed RNA polymerase subunit beta (1162 aa).

The protein belongs to the RNA polymerase beta chain family. The RNAP catalytic core consists of 2 alpha, 1 beta, 1 beta' and 1 omega subunit. When a sigma factor is associated with the core the holoenzyme is formed, which can initiate transcription.

The enzyme catalyses RNA(n) + a ribonucleoside 5'-triphosphate = RNA(n+1) + diphosphate. DNA-dependent RNA polymerase catalyzes the transcription of DNA into RNA using the four ribonucleoside triphosphates as substrates. The chain is DNA-directed RNA polymerase subunit beta from Clavibacter sepedonicus (Clavibacter michiganensis subsp. sepedonicus).